The chain runs to 410 residues: Multifunctional CCA protein (410 aa).

Residues Gly-8 and Arg-11 each contribute to the ATP site. The CTP site is built by Gly-8 and Arg-11. Mg(2+) is bound by residues Glu-21 and Asp-23. ATP-binding residues include Arg-91, Arg-137, and Arg-140. Residues Arg-91, Arg-137, and Arg-140 each contribute to the CTP site. The HD domain maps to Thr-228–Trp-329.

Belongs to the tRNA nucleotidyltransferase/poly(A) polymerase family. Bacterial CCA-adding enzyme type 1 subfamily. Monomer. Can also form homodimers and oligomers. The cofactor is Mg(2+). Ni(2+) serves as cofactor.

The enzyme catalyses a tRNA precursor + 2 CTP + ATP = a tRNA with a 3' CCA end + 3 diphosphate. It carries out the reaction a tRNA with a 3' CCA end + 2 CTP + ATP = a tRNA with a 3' CCACCA end + 3 diphosphate. Functionally, catalyzes the addition and repair of the essential 3'-terminal CCA sequence in tRNAs without using a nucleic acid template. Adds these three nucleotides in the order of C, C, and A to the tRNA nucleotide-73, using CTP and ATP as substrates and producing inorganic pyrophosphate. tRNA 3'-terminal CCA addition is required both for tRNA processing and repair. Also involved in tRNA surveillance by mediating tandem CCA addition to generate a CCACCA at the 3' terminus of unstable tRNAs. While stable tRNAs receive only 3'-terminal CCA, unstable tRNAs are marked with CCACCA and rapidly degraded. The sequence is that of Multifunctional CCA protein from Tolumonas auensis (strain DSM 9187 / NBRC 110442 / TA 4).